Reading from the N-terminus, the 373-residue chain is 4-hydroxy-3-methylbut-2-en-1-yl diphosphate synthase (flavodoxin) (373 aa).

4 residues coordinate [4Fe-4S] cluster: Cys268, Cys271, Cys303, and Glu310.

This sequence belongs to the IspG family. [4Fe-4S] cluster is required as a cofactor.

It catalyses the reaction (2E)-4-hydroxy-3-methylbut-2-enyl diphosphate + oxidized [flavodoxin] + H2O + 2 H(+) = 2-C-methyl-D-erythritol 2,4-cyclic diphosphate + reduced [flavodoxin]. It functions in the pathway isoprenoid biosynthesis; isopentenyl diphosphate biosynthesis via DXP pathway; isopentenyl diphosphate from 1-deoxy-D-xylulose 5-phosphate: step 5/6. Its function is as follows. Converts 2C-methyl-D-erythritol 2,4-cyclodiphosphate (ME-2,4cPP) into 1-hydroxy-2-methyl-2-(E)-butenyl 4-diphosphate. The protein is 4-hydroxy-3-methylbut-2-en-1-yl diphosphate synthase (flavodoxin) of Exiguobacterium sp. (strain ATCC BAA-1283 / AT1b).